Here is a 564-residue protein sequence, read N- to C-terminus: Homeobox protein unc-62 (564 aa).

Disordered stretches follow at residues 40–59 (NEQF…ADPA), 216–270 (ERAS…VMGG), 293–313 (SSSS…LHST), 328–397 (PSTC…KVPK), and 455–503 (IDQN…PSSL). Positions 133–218 (SSDVCSSASF…PLDIVGDERA (86 aa)) constitute an MEIS N-terminal domain. Over residues 219–230 (SSSQPPMSPGSM) the composition is skewed to low complexity. 2 stretches are compositionally biased toward polar residues: residues 328–344 (PSTC…TPLS) and 381–390 (LSDSANGSQN). Positions 392–454 (KRKVPKVFSK…NARRRIVQPM (63 aa)) form a DNA-binding region, homeobox; TALE-type. 2 stretches are compositionally biased toward polar residues: residues 455–469 (IDQN…QMNV) and 494–503 (ANYSPDPSSL).

It belongs to the TALE/MEIS homeobox family. As to quaternary structure, forms a heterodimer with homeobox ceh-60.

The protein localises to the nucleus. Functionally, acts redundantly with ceh-20 and ceh-40 to perform overlapping roles during embryogenesis. Required for postembryonic development of the ectoderm, including the Q, V and P cell lineages, playing a crucial role in ensuring that these cells and their descendants undergo their invariant patterns of cell division, migration, fusion and morphogenesis. Has a role in the mig-13 pathway to promote anterior migration of neuroblasts in the Q lineage. Required for multiple roles in regulating vulva development. Associates with homeobox ceh-60 to regulate gene expression, including repression of genes involved in innate immunity and activation of genes involved in vitellogenesis. Involved in lipid homeostasis, contributing to the formation of the cuticle. This chain is Homeobox protein unc-62 (unc-62), found in Caenorhabditis elegans.